The sequence spans 112 residues: Putative pterin-4-alpha-carbinolamine dehydratase (112 aa).

This sequence belongs to the pterin-4-alpha-carbinolamine dehydratase family.

It carries out the reaction (4aS,6R)-4a-hydroxy-L-erythro-5,6,7,8-tetrahydrobiopterin = (6R)-L-erythro-6,7-dihydrobiopterin + H2O. The polypeptide is Putative pterin-4-alpha-carbinolamine dehydratase (Syntrophotalea carbinolica (strain DSM 2380 / NBRC 103641 / GraBd1) (Pelobacter carbinolicus)).